The following is a 366-amino-acid chain: Chorismate synthase (366 aa).

NADP(+) is bound by residues R48 and R54. FMN contacts are provided by residues 125–127, 238–239, G278, 293–297, and R319; these read RSS, NA, and KPTSS.

This sequence belongs to the chorismate synthase family. As to quaternary structure, homotetramer. Requires FMNH2 as cofactor.

The enzyme catalyses 5-O-(1-carboxyvinyl)-3-phosphoshikimate = chorismate + phosphate. The protein operates within metabolic intermediate biosynthesis; chorismate biosynthesis; chorismate from D-erythrose 4-phosphate and phosphoenolpyruvate: step 7/7. Functionally, catalyzes the anti-1,4-elimination of the C-3 phosphate and the C-6 proR hydrogen from 5-enolpyruvylshikimate-3-phosphate (EPSP) to yield chorismate, which is the branch point compound that serves as the starting substrate for the three terminal pathways of aromatic amino acid biosynthesis. This reaction introduces a second double bond into the aromatic ring system. In Burkholderia ambifaria (strain ATCC BAA-244 / DSM 16087 / CCUG 44356 / LMG 19182 / AMMD) (Burkholderia cepacia (strain AMMD)), this protein is Chorismate synthase.